Reading from the N-terminus, the 246-residue chain is 3'(2'),5'-bisphosphate nucleotidase CysQ (246 aa).

5 residues coordinate Mg(2+): Glu64, Asp83, Leu85, Asp86, and Asp205. Glu64 contributes to the substrate binding site. Residues 85–88 (LDGT) and Asp205 contribute to the substrate site.

It belongs to the inositol monophosphatase superfamily. CysQ family. Requires Mg(2+) as cofactor.

The protein resides in the cell inner membrane. It catalyses the reaction adenosine 3',5'-bisphosphate + H2O = AMP + phosphate. In terms of biological role, converts adenosine-3',5'-bisphosphate (PAP) to AMP. The polypeptide is 3'(2'),5'-bisphosphate nucleotidase CysQ (Escherichia coli O6:H1 (strain CFT073 / ATCC 700928 / UPEC)).